Reading from the N-terminus, the 230-residue chain is Sugar fermentation stimulation protein homolog (230 aa).

Belongs to the SfsA family.

The protein is Sugar fermentation stimulation protein homolog of Clostridium botulinum (strain 657 / Type Ba4).